Reading from the N-terminus, the 163-residue chain is Cyclic pyranopterin monophosphate synthase (163 aa).

Substrate contacts are provided by residues 79 to 81 (LCH) and 117 to 118 (ME). Residue aspartate 132 is part of the active site.

It belongs to the MoaC family. In terms of assembly, homohexamer; trimer of dimers.

It carries out the reaction (8S)-3',8-cyclo-7,8-dihydroguanosine 5'-triphosphate = cyclic pyranopterin phosphate + diphosphate. Its pathway is cofactor biosynthesis; molybdopterin biosynthesis. Functionally, catalyzes the conversion of (8S)-3',8-cyclo-7,8-dihydroguanosine 5'-triphosphate to cyclic pyranopterin monophosphate (cPMP). In Chloroflexus aurantiacus (strain ATCC 29366 / DSM 635 / J-10-fl), this protein is Cyclic pyranopterin monophosphate synthase.